A 173-amino-acid chain; its full sequence is Small ribosomal subunit protein uS10m (173 aa).

This sequence belongs to the universal ribosomal protein uS10 family. Component of the mitochondrial ribosome small subunit (28S) which comprises a 12S rRNA and about 30 distinct proteins.

It is found in the mitochondrion. In Drosophila melanogaster (Fruit fly), this protein is Small ribosomal subunit protein uS10m (mRpS10).